The primary structure comprises 301 residues: ATP synthase gamma chain (301 aa).

It belongs to the ATPase gamma chain family. F-type ATPases have 2 components, CF(1) - the catalytic core - and CF(0) - the membrane proton channel. CF(1) has five subunits: alpha(3), beta(3), gamma(1), delta(1), epsilon(1). CF(0) has three main subunits: a, b and c.

It localises to the cell inner membrane. Functionally, produces ATP from ADP in the presence of a proton gradient across the membrane. The gamma chain is believed to be important in regulating ATPase activity and the flow of protons through the CF(0) complex. This is ATP synthase gamma chain from Helicobacter pylori (strain G27).